Here is a 161-residue protein sequence, read N- to C-terminus: Allophycocyanin beta chain (161 aa).

At N71 the chain carries N4-methylasparagine. Residue C81 participates in (2R,3E)-phycocyanobilin binding.

It belongs to the phycobiliprotein family. Heterodimer of an alpha and a beta chain. In terms of processing, contains one covalently linked phycocyanobilin chromophore.

The protein resides in the plastid. It localises to the chloroplast thylakoid membrane. Light-harvesting photosynthetic bile pigment-protein from the phycobiliprotein complex. Allophycocyanin has a maximum absorption at approximately 650 nanometers. The polypeptide is Allophycocyanin beta chain (apcB) (Cyanidium caldarium (Red alga)).